The primary structure comprises 1349 residues: Serine-aspartate repeat-containing protein D (1349 aa).

Residues Met-1 to Ile-35 form the signal peptide. The YSIRK-G/S signaling motif signature appears at Phe-23–Ser-34. The segment at Leu-36–Glu-568 is ligand binding A region. The tract at residues Glu-54–Ser-185 is disordered. 2 stretches are compositionally biased toward polar residues: residues Glu-62–Gln-71 and Glu-94–Asn-108. The segment covering Lys-130–Asn-145 has biased composition (basic and acidic residues). Polar residues-rich tracts occupy residues Thr-146–Ala-155 and Asn-163–Asn-173. Residues Glu-174–Thr-183 show a composition bias toward basic and acidic residues. CNA-B domains lie at Val-569–Pro-680, Lys-681–Pro-791, Lys-792–Pro-901, Thr-902–Pro-1012, and Lys-1013–Thr-1123. 3 disordered regions span residues Phe-856–Thr-883, Tyr-972–Thr-992, and Ala-1081–Ala-1325. Polar residues-rich tracts occupy residues Ser-860–Ser-869 and Tyr-972–Asn-981. Acidic residues-rich tracts occupy residues Thr-1091–Glu-1101 and Tyr-1118–Ser-1288. The LPXTG sorting signal motif lies at Leu-1312–Gly-1316. At Thr-1315 the chain carries Pentaglycyl murein peptidoglycan amidated threonine. Residues Gly-1316–Lys-1349 constitute a propeptide, removed by sortase.

This sequence belongs to the serine-aspartate repeat-containing protein (SDr) family. As to quaternary structure, interacts with host DSG1; this interaction increases S.aureus adherence to keratinocytes.

Its subcellular location is the secreted. The protein localises to the cell wall. Functionally, cell surface-associated calcium-binding protein which plays an important role in adhesion and pathogenesis. Mediates interactions with components of the extracellular matrix such as host DSG1 to promote bacterial adhesion to host cells. Contributes to the resistance to killing by innate immune components such as neutrophils present in blood and thus attenuates bacterial clearance. The polypeptide is Serine-aspartate repeat-containing protein D (sdrD) (Staphylococcus aureus (strain NCTC 8325 / PS 47)).